The following is a 181-amino-acid chain: Adenine phosphoribosyltransferase (181 aa).

The protein belongs to the purine/pyrimidine phosphoribosyltransferase family. Homodimer.

It localises to the cytoplasm. The catalysed reaction is AMP + diphosphate = 5-phospho-alpha-D-ribose 1-diphosphate + adenine. It functions in the pathway purine metabolism; AMP biosynthesis via salvage pathway; AMP from adenine: step 1/1. Its function is as follows. Catalyzes a salvage reaction resulting in the formation of AMP, that is energically less costly than de novo synthesis. This Chromohalobacter salexigens (strain ATCC BAA-138 / DSM 3043 / CIP 106854 / NCIMB 13768 / 1H11) protein is Adenine phosphoribosyltransferase.